The following is a 428-amino-acid chain: Histone deacetylase 3 (428 aa).

The tract at residues K3–D316 is histone deacetylase. Residues H17, G21, and K25 each coordinate 1D-myo-inositol 1,4,5,6-tetrakisphosphate. Residue H135 is part of the active site. Residues D170, H172, and D259 each contribute to the Zn(2+) site. Residue R265 participates in 1D-myo-inositol 1,4,5,6-tetrakisphosphate binding. Composition is skewed to basic and acidic residues over residues S386–S405 and D415–I428. Residues S386–I428 are disordered.

Belongs to the histone deacetylase family. HD type 1 subfamily.

Its subcellular location is the nucleus. The protein resides in the chromosome. The protein localises to the cytoplasm. It is found in the cytosol. The enzyme catalyses N(6)-acetyl-L-lysyl-[histone] + H2O = L-lysyl-[histone] + acetate. It carries out the reaction N(6)-acetyl-L-lysyl-[protein] + H2O = L-lysyl-[protein] + acetate. It catalyses the reaction N(6)-(2E)-butenoyl-L-lysyl-[protein] + H2O = (2E)-2-butenoate + L-lysyl-[protein]. The catalysed reaction is N(6)-(2-hydroxyisobutanoyl)-L-lysyl-[protein] + H2O = 2-hydroxy-2-methylpropanoate + L-lysyl-[protein]. The enzyme catalyses N(6)-[(S)-lactoyl]-L-lysyl-[protein] + H2O = (S)-lactate + L-lysyl-[protein]. Inositol tetraphosphate (1D-myo-inositol 1,4,5,6-tetrakisphosphate) promotes the histone deacetylase activity by acting as an intermolecular glue between hdac3 and N-Cor repressor complex components. Functionally, histone deacetylase that catalyzes the deacetylation of lysine residues on the N-terminal part of the core histones (H2A, H2B, H3 and H4), and some other non-histone substrates. Histone deacetylation gives a tag for epigenetic repression and plays an important role in transcriptional regulation, cell cycle progression and developmental events. Histone deacetylases act via the formation of large multiprotein complexes, such as N-Cor repressor complex, which activate the histone deacetylase activity. Participates in the BCL6 transcriptional repressor activity by deacetylating the H3 'Lys-27' (H3K27) on enhancer elements, antagonizing EP300 acetyltransferase activity and repressing proximal gene expression. Also functions as a deacetylase for non-histone targets. In addition to protein deacetylase activity, also acts as a protein-lysine deacylase by recognizing other acyl groups: catalyzes removal of (2E)-butenoyl (crotonyl), lactoyl (lactyl) and 2-hydroxyisobutanoyl (2-hydroxyisobutyryl) acyl groups from lysine residues, leading to protein decrotonylation, delactylation and de-2-hydroxyisobutyrylation, respectively. The polypeptide is Histone deacetylase 3 (hdac3) (Xenopus tropicalis (Western clawed frog)).